The sequence spans 668 residues: Threonine--tRNA ligase (668 aa).

Residues 1 to 64 (MSQSVSLTFP…TDGKIEIITR (64 aa)) enclose the TGS domain. Positions 245 to 553 (DHRKLGREMD…LIENFAGHMP (309 aa)) are catalytic. Cys-347, His-398, and His-530 together coordinate Zn(2+).

The protein belongs to the class-II aminoacyl-tRNA synthetase family. In terms of assembly, homodimer. Requires Zn(2+) as cofactor.

The protein resides in the cytoplasm. It carries out the reaction tRNA(Thr) + L-threonine + ATP = L-threonyl-tRNA(Thr) + AMP + diphosphate + H(+). Catalyzes the attachment of threonine to tRNA(Thr) in a two-step reaction: L-threonine is first activated by ATP to form Thr-AMP and then transferred to the acceptor end of tRNA(Thr). Also edits incorrectly charged L-seryl-tRNA(Thr). The protein is Threonine--tRNA ligase of Rhizobium etli (strain ATCC 51251 / DSM 11541 / JCM 21823 / NBRC 15573 / CFN 42).